The chain runs to 289 residues: Acetyl-coenzyme A carboxylase carboxyl transferase subunit beta (289 aa).

Residues 28-289 (VMTKCPKCKK…QGGGMAVWQS (262 aa)) form the CoA carboxyltransferase N-terminal domain. 4 residues coordinate Zn(2+): Cys32, Cys35, Cys51, and Cys54. The segment at 32–54 (CPKCKKIMYTKELLKNLKVCVNC) adopts a C4-type zinc-finger fold.

This sequence belongs to the AccD/PCCB family. Acetyl-CoA carboxylase is a heterohexamer composed of biotin carboxyl carrier protein (AccB), biotin carboxylase (AccC) and two subunits each of ACCase subunit alpha (AccA) and ACCase subunit beta (AccD). It depends on Zn(2+) as a cofactor.

The protein localises to the cytoplasm. The enzyme catalyses N(6)-carboxybiotinyl-L-lysyl-[protein] + acetyl-CoA = N(6)-biotinyl-L-lysyl-[protein] + malonyl-CoA. It participates in lipid metabolism; malonyl-CoA biosynthesis; malonyl-CoA from acetyl-CoA: step 1/1. Functionally, component of the acetyl coenzyme A carboxylase (ACC) complex. Biotin carboxylase (BC) catalyzes the carboxylation of biotin on its carrier protein (BCCP) and then the CO(2) group is transferred by the transcarboxylase to acetyl-CoA to form malonyl-CoA. The polypeptide is Acetyl-coenzyme A carboxylase carboxyl transferase subunit beta (Bacillus mycoides (strain KBAB4) (Bacillus weihenstephanensis)).